Here is an 818-residue protein sequence, read N- to C-terminus: Protocadherin beta-1 (818 aa).

An N-terminal signal peptide occupies residues 1–28; it reads MAGTRRKSLQNRQVGSLLIFLCISVGDA. At 29 to 691 the chain is on the extracellular side; that stretch reads TTIRYSVAEE…RKVNPSTKYL (663 aa). 5 Cadherin domains span residues 35-133, 138-242, 243-347, 348-452, and 457-562; these read VAEE…APVF, PLLK…VPQF, SRLV…PPEV, MVSS…PPIF, and YILT…RPMI. 4 N-linked (GlcNAc...) asparagine glycosylation sites follow: N169, N209, N257, and N419. Residue N568 is glycosylated (N-linked (GlcNAc...) asparagine). The Cadherin 6 domain occupies 577-672; sequence VPRSAEAGYL…LVDGFSEPYL (96 aa). Residues 692–712 traverse the membrane as a helical segment; that stretch reads VISLVILSFLFLLSVIVIFII. At 713–818 the chain is on the cytoplasmic side; it reads HVYQKIKYRE…GHDQVSDDYM (106 aa). Residues 789–818 form a disordered region; that stretch reads MEAGSSLPPNSDRNKSQRLEGHDQVSDDYM. Residues 800–818 show a composition bias toward basic and acidic residues; it reads DRNKSQRLEGHDQVSDDYM.

It localises to the cell membrane. Potential calcium-dependent cell-adhesion protein. May be involved in the establishment and maintenance of specific neuronal connections in the brain. The sequence is that of Protocadherin beta-1 (PCDHB1) from Homo sapiens (Human).